Consider the following 414-residue polypeptide: ORC1-type DNA replication protein 1 (414 aa).

ATP contacts are provided by residues 70–74 (TGKTA), Tyr-213, and Arg-225.

Belongs to the CDC6/cdc18 family.

Involved in regulation of DNA replication. In Methanosarcina acetivorans (strain ATCC 35395 / DSM 2834 / JCM 12185 / C2A), this protein is ORC1-type DNA replication protein 1 (cdc6-1).